The chain runs to 284 residues: NAD kinase (284 aa).

Aspartate 61 functions as the Proton acceptor in the catalytic mechanism. NAD(+) is bound by residues 61–62 (DG), arginine 66, 136–137 (ND), arginine 147, lysine 164, aspartate 166, and leucine 201.

This sequence belongs to the NAD kinase family. A divalent metal cation is required as a cofactor.

Its subcellular location is the cytoplasm. The catalysed reaction is NAD(+) + ATP = ADP + NADP(+) + H(+). Its function is as follows. Involved in the regulation of the intracellular balance of NAD and NADP, and is a key enzyme in the biosynthesis of NADP. Catalyzes specifically the phosphorylation on 2'-hydroxyl of the adenosine moiety of NAD to yield NADP. The chain is NAD kinase from Dehalococcoides mccartyi (strain CBDB1).